A 194-amino-acid polypeptide reads, in one-letter code: dITP/XTP pyrophosphatase (194 aa).

Position 9–14 (9–14 (THNPGK)) interacts with substrate. Positions 40 and 69 each coordinate Mg(2+). Asp-69 serves as the catalytic Proton acceptor. Substrate is bound by residues Ser-70, 152–155 (FGYD), Lys-175, and 180–181 (HR).

It belongs to the HAM1 NTPase family. Homodimer. Mg(2+) is required as a cofactor.

The enzyme catalyses XTP + H2O = XMP + diphosphate + H(+). It catalyses the reaction dITP + H2O = dIMP + diphosphate + H(+). The catalysed reaction is ITP + H2O = IMP + diphosphate + H(+). In terms of biological role, pyrophosphatase that catalyzes the hydrolysis of nucleoside triphosphates to their monophosphate derivatives, with a high preference for the non-canonical purine nucleotides XTP (xanthosine triphosphate), dITP (deoxyinosine triphosphate) and ITP. Seems to function as a house-cleaning enzyme that removes non-canonical purine nucleotides from the nucleotide pool, thus preventing their incorporation into DNA/RNA and avoiding chromosomal lesions. This chain is dITP/XTP pyrophosphatase, found in Caulobacter vibrioides (strain ATCC 19089 / CIP 103742 / CB 15) (Caulobacter crescentus).